Here is an 83-residue protein sequence, read N- to C-terminus: MRSMEGSVPKYPEPTEGSIGASGAKRSWPEVVGMSAEKAKEIILRDKPDAQIEVIPVDAMVPLDFNPNRIFILVAVARTPTVG.

Residues 1 to 28 are disordered; the sequence is MRSMEGSVPKYPEPTEGSIGASGAKRSW.

Belongs to the protease inhibitor I13 (potato type I serine protease inhibitor) family.

In terms of biological role, inhibits both subtilisin and chymotrypsin. The sequence is that of Subtilisin-chymotrypsin inhibitor CI-1B from Hordeum vulgare (Barley).